The sequence spans 488 residues: Bifunctional protein HldE (488 aa).

The segment at 1 to 332 is ribokinase; that stretch reads MRESFLDTIQ…QELQSQQSAA (332 aa). 208-211 serves as a coordination point for ATP; that stretch reads NKRE. Residue D277 is part of the active site. Residues 359 to 488 form a cytidylyltransferase region; sequence FTNGCFDLLH…TSNIIRKLAS (130 aa).

It in the N-terminal section; belongs to the carbohydrate kinase PfkB family. The protein in the C-terminal section; belongs to the cytidylyltransferase family. As to quaternary structure, homodimer.

The enzyme catalyses D-glycero-beta-D-manno-heptose 7-phosphate + ATP = D-glycero-beta-D-manno-heptose 1,7-bisphosphate + ADP + H(+). It carries out the reaction D-glycero-beta-D-manno-heptose 1-phosphate + ATP + H(+) = ADP-D-glycero-beta-D-manno-heptose + diphosphate. It participates in nucleotide-sugar biosynthesis; ADP-L-glycero-beta-D-manno-heptose biosynthesis; ADP-L-glycero-beta-D-manno-heptose from D-glycero-beta-D-manno-heptose 7-phosphate: step 1/4. The protein operates within nucleotide-sugar biosynthesis; ADP-L-glycero-beta-D-manno-heptose biosynthesis; ADP-L-glycero-beta-D-manno-heptose from D-glycero-beta-D-manno-heptose 7-phosphate: step 3/4. In terms of biological role, catalyzes the phosphorylation of D-glycero-D-manno-heptose 7-phosphate at the C-1 position to selectively form D-glycero-beta-D-manno-heptose-1,7-bisphosphate. Catalyzes the ADP transfer from ATP to D-glycero-beta-D-manno-heptose 1-phosphate, yielding ADP-D-glycero-beta-D-manno-heptose. In Methylobacillus flagellatus (strain ATCC 51484 / DSM 6875 / VKM B-1610 / KT), this protein is Bifunctional protein HldE.